The primary structure comprises 321 residues: Epiphycan (321 aa).

The N-terminal stretch at 1 to 19 (MKALARLIVGLLILDAAVT) is a signal peptide. T60 carries O-linked (GalNAc...) threonine glycosylation. A glycan (O-linked (Xyl...) (dermatan sulfate) serine) is linked at S64. Residues 64 to 100 (SGNRELLTPPPQPEEAEEEEEEESTPRLIDGSSPQEP) form a disordered region. Residues 77–86 (EEAEEEEEEE) are compositionally biased toward acidic residues. A glycan (O-linked (GalNAc...) serine) is linked at S95. The LRRNT domain maps to 105–142 (VLGPQTNEDFPTCLLCTCISTTVYCDDHELDAIPPLPK). A disulfide bond links C117 and C129. LRR repeat units follow at residues 143 to 164 (NTAY…DFAS), 167 to 188 (DLRR…AFRK), 191 to 212 (QLRE…PTTL), 237 to 257 (DLHH…PLPE), and 258 to 279 (NLRA…TFCN). Cysteines 278 and 311 form a disulfide. An N-linked (GlcNAc...) asparagine glycan is attached at N282. An LRR 6 repeat occupies 289 to 309 (ALEDIRLDGNPINLSKTPQAY).

It belongs to the small leucine-rich proteoglycan (SLRP) family. SLRP class III subfamily. In terms of processing, a long and a short form present in approximately equimolar amounts may arise by proteolysis or cleavage by exopeptidases. Post-translationally, the O-linked polysaccharides on Thr-60 and Ser-95 are probably the mucin type linked to GalNAc. There is one glycosaminoglycan chain, known to be dermatan sulfate, and it is probably the O-glycosylation at Ser-64. As to expression, preferentially expressed in the zone of flattened chondrocytes of the developing limb cartilage.

It localises to the secreted. It is found in the extracellular space. Its subcellular location is the extracellular matrix. In terms of biological role, may have a role in bone formation and also in establishing the ordered structure of cartilage through matrix organization. This Bos taurus (Bovine) protein is Epiphycan (EPYC).